We begin with the raw amino-acid sequence, 427 residues long: Adenylosuccinate synthetase (427 aa).

GTP-binding positions include 11–17 (GDEGKGK) and 39–41 (GHT). The active-site Proton acceptor is the aspartate 12. Residues aspartate 12 and glycine 39 each coordinate Mg(2+). IMP-binding positions include 12–15 (DEGK), 37–40 (NAGH), threonine 132, arginine 146, glutamine 223, threonine 238, and arginine 302. Histidine 40 functions as the Proton donor in the catalytic mechanism. A substrate-binding site is contributed by 298-304 (TTTGRPR). Residues arginine 304, 330 to 332 (KLD), and 412 to 414 (GVG) contribute to the GTP site.

Belongs to the adenylosuccinate synthetase family. Homodimer. Mg(2+) is required as a cofactor.

The protein localises to the cytoplasm. The enzyme catalyses IMP + L-aspartate + GTP = N(6)-(1,2-dicarboxyethyl)-AMP + GDP + phosphate + 2 H(+). It participates in purine metabolism; AMP biosynthesis via de novo pathway; AMP from IMP: step 1/2. In terms of biological role, plays an important role in the de novo pathway and in the salvage pathway of purine nucleotide biosynthesis. Catalyzes the first committed step in the biosynthesis of AMP from IMP. The polypeptide is Adenylosuccinate synthetase (purA) (Dictyostelium discoideum (Social amoeba)).